We begin with the raw amino-acid sequence, 151 residues long: 3-hydroxyacyl-[acyl-carrier-protein] dehydratase FabZ (151 aa).

The active site involves H49.

The protein belongs to the thioester dehydratase family. FabZ subfamily.

The protein resides in the cytoplasm. It carries out the reaction a (3R)-hydroxyacyl-[ACP] = a (2E)-enoyl-[ACP] + H2O. Involved in unsaturated fatty acids biosynthesis. Catalyzes the dehydration of short chain beta-hydroxyacyl-ACPs and long chain saturated and unsaturated beta-hydroxyacyl-ACPs. In Wolinella succinogenes (strain ATCC 29543 / DSM 1740 / CCUG 13145 / JCM 31913 / LMG 7466 / NCTC 11488 / FDC 602W) (Vibrio succinogenes), this protein is 3-hydroxyacyl-[acyl-carrier-protein] dehydratase FabZ.